A 507-amino-acid polypeptide reads, in one-letter code: Cytochrome c-type protein ImcH (507 aa).

Transmembrane regions (helical) follow at residues 14–34, 45–65, and 100–120; these read ISLIGFLLAVVATGLIIAFIA, YIGLLVYFAFPGMLILGLILV, and LFIFFVLASVIFVLIVSVASI. The heme site is built by Cys-132, Cys-136, Met-140, His-152, Cys-157, Cys-160, His-161, Asp-400, Cys-449, Cys-452, His-453, Cys-487, Cys-490, His-491, and Glu-496.

This sequence belongs to the NapC/NirT/NrfH family. Binds 4 heme c groups covalently per subunit.

The protein resides in the cell inner membrane. Functionally, redox protein involved in a high-potential metal respiratory pathway. Is required only for electron transfer to terminal extracellular electron acceptors with redox potentials higher than -0.1 V. ImcH likely transfers electrons from the quinone pool to a periplasmic acceptor. The polypeptide is Cytochrome c-type protein ImcH (Geobacter sulfurreducens (strain ATCC 51573 / DSM 12127 / PCA)).